Reading from the N-terminus, the 279-residue chain is Esterase CG5412 (279 aa).

Residues Ser-133, Asp-191, and His-218 each act as charge relay system in the active site. The interval 249–279 (QSGNASFVDSGAEDDNDAEVAAMTAELDESD) is disordered.

This sequence belongs to the LovG family.

In Drosophila melanogaster (Fruit fly), this protein is Esterase CG5412.